We begin with the raw amino-acid sequence, 259 residues long: Adenosylcobinamide-GDP ribazoletransferase (259 aa).

The next 7 helical transmembrane spans lie at 36–56, 65–85, 108–128, 133–153, 175–195, 201–221, and 238–258; these read FSPL…ILLL, MPFI…VDGL, IGAS…AALF, LILF…IWAI, GFLI…FILI, IIST…ALII, and GASV…ILPA.

The protein belongs to the CobS family. Requires Mg(2+) as cofactor.

The protein resides in the cell inner membrane. It catalyses the reaction alpha-ribazole + adenosylcob(III)inamide-GDP = adenosylcob(III)alamin + GMP + H(+). The enzyme catalyses alpha-ribazole 5'-phosphate + adenosylcob(III)inamide-GDP = adenosylcob(III)alamin 5'-phosphate + GMP + H(+). It functions in the pathway cofactor biosynthesis; adenosylcobalamin biosynthesis; adenosylcobalamin from cob(II)yrinate a,c-diamide: step 7/7. Functionally, joins adenosylcobinamide-GDP and alpha-ribazole to generate adenosylcobalamin (Ado-cobalamin). Also synthesizes adenosylcobalamin 5'-phosphate from adenosylcobinamide-GDP and alpha-ribazole 5'-phosphate. This Prochlorococcus marinus (strain SARG / CCMP1375 / SS120) protein is Adenosylcobinamide-GDP ribazoletransferase.